Here is a 631-residue protein sequence, read N- to C-terminus: Phosphomethylpyrimidine synthase (631 aa).

Substrate contacts are provided by residues asparagine 239, methionine 268, tyrosine 297, histidine 333, 353–355 (SRG), 394–397 (DGLR), and glutamate 433. Zn(2+) is bound at residue histidine 437. Tyrosine 460 contacts substrate. Histidine 501 lines the Zn(2+) pocket. Residues cysteine 581, cysteine 584, and cysteine 589 each contribute to the [4Fe-4S] cluster site.

This sequence belongs to the ThiC family. In terms of assembly, homodimer. It depends on [4Fe-4S] cluster as a cofactor.

The enzyme catalyses 5-amino-1-(5-phospho-beta-D-ribosyl)imidazole + S-adenosyl-L-methionine = 4-amino-2-methyl-5-(phosphooxymethyl)pyrimidine + CO + 5'-deoxyadenosine + formate + L-methionine + 3 H(+). It functions in the pathway cofactor biosynthesis; thiamine diphosphate biosynthesis. Its function is as follows. Catalyzes the synthesis of the hydroxymethylpyrimidine phosphate (HMP-P) moiety of thiamine from aminoimidazole ribotide (AIR) in a radical S-adenosyl-L-methionine (SAM)-dependent reaction. The chain is Phosphomethylpyrimidine synthase from Escherichia coli O6:K15:H31 (strain 536 / UPEC).